The following is a 396-amino-acid chain: Phosphoglycerate kinase (396 aa).

Residues 21-23, Arg-36, 59-62, Arg-119, and Arg-156 each bind substrate; these read DFN and HLGK. ATP contacts are provided by residues Lys-206, Glu-325, and 352–355; that span reads GGDS.

It belongs to the phosphoglycerate kinase family. Monomer.

The protein localises to the cytoplasm. It carries out the reaction (2R)-3-phosphoglycerate + ATP = (2R)-3-phospho-glyceroyl phosphate + ADP. The protein operates within carbohydrate degradation; glycolysis; pyruvate from D-glyceraldehyde 3-phosphate: step 2/5. This Staphylococcus carnosus (strain TM300) protein is Phosphoglycerate kinase.